The following is a 98-amino-acid chain: Ig heavy chain V region 6.96 (98 aa).

In terms of domain architecture, Ig-like spans 1 to 98 (EVQLVESGGG…EDTAMYYCAR (98 aa)).

This chain is Ig heavy chain V region 6.96, found in Mus musculus (Mouse).